Consider the following 139-residue polypeptide: Gastrula zinc finger protein XlCGF67.1 (139 aa).

5 consecutive C2H2-type zinc fingers follow at residues 6–28 (VSCP…KKVH), 33–55 (YSCS…LRTH), 61–83 (YSCS…KRIH), 89–111 (FSCQ…QKIH), and 117–139 (FSCS…SRIH).

This sequence belongs to the krueppel C2H2-type zinc-finger protein family.

It is found in the nucleus. In terms of biological role, may be involved in transcriptional regulation. The sequence is that of Gastrula zinc finger protein XlCGF67.1 from Xenopus laevis (African clawed frog).